A 143-amino-acid chain; its full sequence is Histone H2AX (143 aa).

The disordered stretch occupies residues 1–22 (MSGRGKTGGKARAKAKSRSSRA). N-acetylserine is present on Ser2. Residue Ser2 is modified to Phosphoserine. An N6-acetyllysine mark is found at Lys6 and Lys10. Residues 7–19 (TGGKARAKAKSRS) are compositionally biased toward basic residues. The residue at position 10 (Lys10) is an N6-lactoyllysine; alternate. Residues Lys14 and Lys16 each participate in a glycyl lysine isopeptide (Lys-Gly) (interchain with G-Cter in ubiquitin) cross-link. Lys37 carries the post-translational modification N6-acetyllysine; by CREBBP and EP300. Residue Lys120 forms a Glycyl lysine isopeptide (Lys-Gly) (interchain with G-Cter in ubiquitin) linkage. Phosphoserine occurs at positions 121 and 122. Positions 121-143 (SSATVGPKAPAVGKKASQASQEY) are disordered. Glycyl lysine isopeptide (Lys-Gly) (interchain with G-Cter in SUMO2) cross-links involve residues Lys128 and Lys135. A Phosphoserine modification is found at Ser137. Ser140 bears the Phosphoserine; by ATM, ATR and PRKDC mark. Residues 140-141 (SQ) carry the [ST]-Q motif motif. At Tyr143 the chain carries Phosphotyrosine; by WSTF.

It belongs to the histone H2A family. The nucleosome is a histone octamer containing two molecules each of H2A, H2B, H3 and H4 assembled in one H3-H4 heterotetramer and two H2A-H2B heterodimers. The octamer wraps approximately 147 bp of DNA. Interacts with numerous proteins required for DNA damage signaling and repair when phosphorylated on Ser-140. These include MDC1, BRCA1 and the MRN complex, composed of MRE11, RAD50, and NBN. Interaction with the MRN complex is mediated at least in part by NBN. Also interacts with DHX9/NDHII when phosphorylated on Ser-140 and MCPH1 when phosphorylated at Ser-140 or Tyr-143. Interacts with ARRB2; the interaction is detected in the nucleus upon OR1D2 stimulation. Interacts with WRAP53/TCAB1. Interacts with TP53BP1. Interacts with HDGFL2. Post-translationally, phosphorylated on Ser-140 (to form gamma-H2AX or H2AX139ph) in response to DNA double strand breaks (DSBs) generated by exogenous genotoxic agents, by stalled replication forks, by meiotic recombination events and during immunoglobulin class switching in lymphocytes. Phosphorylation can extend up to several thousand nucleosomes from the actual site of the DSB and may mark the surrounding chromatin for recruitment of proteins required for DNA damage signaling and repair. Widespread phosphorylation may also serve to amplify the damage signal or aid repair of persistent lesions. Phosphorylation of Ser-140 (H2AX139ph) in response to ionizing radiation is mediated by both ATM and PRKDC while defects in DNA replication induce Ser-140 phosphorylation (H2AX139ph) subsequent to activation of ATR and PRKDC. Dephosphorylation of Ser-140 by PP2A is required for DNA DSB repair. In meiosis, Ser-140 phosphorylation (H2AX139ph) first occurs at synaptonemal complexes during leptotene and is an ATM-dependent response to the formation of programmed DSBs by SPO11. Ser-140 phosphorylation (H2AX139ph) subsequently occurs at unsynapsed regions of both autosomes and the XY bivalent during zygotene and is ATR- and BRCA1-dependent. Ser-140 phosphorylation (H2AX139ph) may also be required for transcriptional repression of unsynapsed chromatin and meiotic sex chromosome inactivation (MSCI), whereby the X and Y chromosomes condense in pachytene to form the heterochromatic XY-body. During immunoglobulin class switch recombination in lymphocytes, Ser-140 phosphorylation (H2AX139ph) at sites of DNA-recombination requires the activation-induced cytidine deaminase AICDA. Phosphorylation at Tyr-143 (H2AXY142ph) by BAZ1B/WSTF determines the relative recruitment of either DNA repair or pro-apoptotic factors. Phosphorylation at Tyr-143 (H2AXY142ph) favors the recruitment of APBB1/FE65 and pro-apoptosis factors such as MAPK8/JNK1, triggering apoptosis. In contrast, dephosphorylation of Tyr-143 by EYA proteins (EYA1, EYA2, EYA3 or EYA4) favors the recruitment of MDC1-containing DNA repair complexes to the tail of phosphorylated Ser-140 (H2AX139ph). Phosphorylated by VRK1. Monoubiquitination of Lys-120 (H2AXK119ub) by RING1 and RNF2/RING2 complex gives a specific tag for epigenetic transcriptional repression. Following DNA double-strand breaks (DSBs), it is ubiquitinated through 'Lys-63' linkage of ubiquitin moieties by the E2 ligase UBE2N and the E3 ligases RNF8 and RNF168, leading to the recruitment of repair proteins to sites of DNA damage. Ubiquitination at Lys-14 and Lys-16 (H2AK13Ub and H2AK15Ub, respectively) in response to DNA damage is initiated by RNF168 that mediates monoubiquitination at these 2 sites, and 'Lys-63'-linked ubiquitin are then conjugated to monoubiquitin; RNF8 is able to extend 'Lys-63'-linked ubiquitin chains in vitro. H2AK119Ub and ionizing radiation-induced 'Lys-63'-linked ubiquitination (H2AK13Ub and H2AK15Ub) are distinct events. In terms of processing, acetylation at Lys-6 (H2AXK5ac) by KAT5 component of the NuA4 histone acetyltransferase complex promotes NBN/NBS1 assembly at the sites of DNA damage. Acetylation at Lys-37 increases in S and G2 phases. This modification has been proposed to be important for DNA double-strand break repair. In terms of tissue distribution, most abundant in testis, thymus and spleen.

The protein resides in the nucleus. It localises to the chromosome. Variant histone H2A which replaces conventional H2A in a subset of nucleosomes. Nucleosomes wrap and compact DNA into chromatin, limiting DNA accessibility to the cellular machineries which require DNA as a template. Histones thereby play a central role in transcription regulation, DNA repair, DNA replication and chromosomal stability. DNA accessibility is regulated via a complex set of post-translational modifications of histones, also called histone code, and nucleosome remodeling. Required for checkpoint-mediated arrest of cell cycle progression in response to low doses of ionizing radiation and for efficient repair of DNA double strand breaks (DSBs) specifically when modified by C-terminal phosphorylation. In Mus musculus (Mouse), this protein is Histone H2AX.